Consider the following 358-residue polypeptide: Glucose 1-dehydrogenase (358 aa).

Cysteine 38 is a Zn(2+) binding site. Threonine 40 lines the substrate pocket. Histidine 65, glutamate 66, cysteine 92, cysteine 95, cysteine 98, and cysteine 106 together coordinate Zn(2+). Glutamate 113, glutamate 149, and asparagine 153 together coordinate substrate. Glutamate 149 contributes to the Zn(2+) binding site. NADP(+)-binding positions include 187–190 (SGPI), 209–211 (NRR), 268–270 (FGT), 296–298 (SVN), and lysine 342. Substrate is bound at residue asparagine 298.

This sequence belongs to the zinc-containing alcohol dehydrogenase family. Glucose 1-dehydrogenase subfamily. Zn(2+) is required as a cofactor.

The enzyme catalyses D-glucose + NAD(+) = D-glucono-1,5-lactone + NADH + H(+). It catalyses the reaction D-glucose + NADP(+) = D-glucono-1,5-lactone + NADPH + H(+). Catalyzes the NAD(P)(+)-dependent oxidation of D-glucose to D-gluconate via gluconolactone. Can utilize both NAD(+) and NADP(+) as electron acceptor. Is involved in the degradation of glucose through a non-phosphorylative variant of the Entner-Doudoroff pathway. The protein is Glucose 1-dehydrogenase of Metallosphaera sedula (strain ATCC 51363 / DSM 5348 / JCM 9185 / NBRC 15509 / TH2).